Consider the following 146-residue polypeptide: Aspartate 1-decarboxylase (146 aa).

Ser25 (schiff-base intermediate with substrate; via pyruvic acid) is an active-site residue. A Pyruvic acid (Ser) modification is found at Ser25. Substrate is bound at residue Thr57. Tyr58 acts as the Proton donor in catalysis. Residue 73–75 (GPA) participates in substrate binding.

The protein belongs to the PanD family. In terms of assembly, heterooctamer of four alpha and four beta subunits. It depends on pyruvate as a cofactor. Is synthesized initially as an inactive proenzyme, which is activated by self-cleavage at a specific serine bond to produce a beta-subunit with a hydroxyl group at its C-terminus and an alpha-subunit with a pyruvoyl group at its N-terminus.

It localises to the cytoplasm. The enzyme catalyses L-aspartate + H(+) = beta-alanine + CO2. It participates in cofactor biosynthesis; (R)-pantothenate biosynthesis; beta-alanine from L-aspartate: step 1/1. Functionally, catalyzes the pyruvoyl-dependent decarboxylation of aspartate to produce beta-alanine. The protein is Aspartate 1-decarboxylase of Salinibacter ruber (strain DSM 13855 / M31).